Here is a 596-residue protein sequence, read N- to C-terminus: Phosphoenolpyruvate carboxykinase [GTP] (596 aa).

Residues Arg77 and 205 to 207 each bind substrate; that span reads YGG. Lys214 and His234 together coordinate Mn(2+). Substrate is bound at residue Ser256. A GTP-binding site is contributed by 257-262; the sequence is ACGKTN. The active site involves Cys258. Position 283 (Asp283) interacts with Mn(2+). The disordered stretch occupies residues 362–388; the sequence is KKGSTEKAAHPNSRFTAPAKNNPAISP. 373–375 lines the substrate pocket; the sequence is NSR. GTP contacts are provided by residues Arg375, Arg406, and 499–502; that span reads YGDN.

Belongs to the phosphoenolpyruvate carboxykinase [GTP] family. Monomer. Requires Mn(2+) as cofactor.

The protein resides in the cytoplasm. It carries out the reaction oxaloacetate + GTP = phosphoenolpyruvate + GDP + CO2. It functions in the pathway carbohydrate biosynthesis; gluconeogenesis. Functionally, catalyzes the conversion of oxaloacetate (OAA) to phosphoenolpyruvate (PEP), the rate-limiting step in the metabolic pathway that produces glucose from lactate and other precursors derived from the citric acid cycle. This chain is Phosphoenolpyruvate carboxykinase [GTP], found in Anaeromyxobacter sp. (strain K).